We begin with the raw amino-acid sequence, 178 residues long: Transmembrane protein 196 (178 aa).

4 consecutive transmembrane segments (helical) span residues 11-31 (LLVL…VGAV), 47-67 (SSPV…ILCA), 73-93 (LVMI…ILNF), and 106-126 (LYPL…GCTL).

In terms of tissue distribution, expression is significantly decreased in lung cancer cells compared to normal lung tissue (at protein level).

The protein resides in the cytoplasm. The protein localises to the membrane. Functionally, acts as a tumor suppressor in lung cancer. Inhibits tumor cell growth by inhibiting cell proliferation and migration and promoting cell apoptosis. Inhibits metastasis of lung cancer by suppressing beta-catenin expression in the Wnt/beta-catenin signaling pathway. The protein is Transmembrane protein 196 (TMEM196) of Homo sapiens (Human).